The following is a 212-amino-acid chain: Large ribosomal subunit protein uL3 (212 aa).

The residue at position 153 (Gln153) is an N5-methylglutamine.

The protein belongs to the universal ribosomal protein uL3 family. As to quaternary structure, part of the 50S ribosomal subunit. Forms a cluster with proteins L14 and L19. Post-translationally, methylated by PrmB.

In terms of biological role, one of the primary rRNA binding proteins, it binds directly near the 3'-end of the 23S rRNA, where it nucleates assembly of the 50S subunit. This Dechloromonas aromatica (strain RCB) protein is Large ribosomal subunit protein uL3.